The chain runs to 313 residues: E3 ubiquitin-protein ligase SGIP1 (313 aa).

In terms of domain architecture, F-box spans 16 to 65 (REYSKEIPIDLLIEIFSRLSTGDIARCRCVSKIWSSVPRLRDFTELFLKI).

As to quaternary structure, interacts with SGS3 in cytoplasmic granules.

It localises to the cytoplasmic granule. The catalysed reaction is S-ubiquitinyl-[E2 ubiquitin-conjugating enzyme]-L-cysteine + [acceptor protein]-L-lysine = [E2 ubiquitin-conjugating enzyme]-L-cysteine + N(6)-ubiquitinyl-[acceptor protein]-L-lysine.. Its pathway is protein degradation; proteasomal ubiquitin-dependent pathway. It participates in protein modification; protein ubiquitination. In terms of biological role, E3 ubiquitin-protein ligase which triggers the ubiquitination and subsequent degradation of SGS3 in response to heat. Involved in the mechanisms necessary for quick response to heat and subsequent heritable transgenerational memory of heat acclimation (global warming) such as early flowering and attenuated immunity; this process includes epigenetic regulation as well as post-transcriptional gene silencing (PTGS). In response to heat, HSFA2 is activated and promotes the expression of REF6 which in turn derepresses HSFA2, thus establishing an inheritable feedback loop able to trigger SGIP1 and subsequent SGIP1-mediated SGS3 degradation; this prevents the biosynthesis of trans-acting siRNA (tasiRNA) and leads to the release of HTT5, which drives early flowering but attenuates immunity. This is E3 ubiquitin-protein ligase SGIP1 from Arabidopsis thaliana (Mouse-ear cress).